The following is a 369-amino-acid chain: MYKLAVCTLLILSVTAIDVTNSVWTSHDQKAFAQIKQSGWGNFILNFGELHLQTGGILAELNTEIAKLIDELDEELAEVHHQYARRTDVHNREVSRLEQEIQDKEREVFNAHDFYDNVLIPQRDRFAAQLEQLQENIAQNRRTLNEATVQRANDHAEFESQVAEHNEAISAIDESLQLLSQLESPSLVQIQKVQKNLTKIQQSLKRHSTFQTFIKTLLEIAVEANFADQGALREILTAFNNLRVQLVDSLNQLTADEAEAQKDFEARVIQLNQEHAEFQRAVVVKTAEIEANANKIEQTLDLIDVLHADLDTLNGQLQAENDDYAFATDVYNATVSEYNKELNAAHQALDLLNQPRFTDYVKSQLKGAF.

A signal peptide spans Met1–Ala16. Residues Ile17–Gly55 constitute a propeptide that is removed on maturation. Residues Gly56–Ser180 are a coiled coil. Residues Ile190–Asn225 constitute a propeptide that is removed on maturation. Residues Lys262 to Gln354 adopt a coiled-coil conformation.

This sequence belongs to the TMP family. Two components are produced by post-translational processing from the precursor peptide.

It is found in the trichocyst. Structural protein that crystallize inside the trichocyst matrix. The protein is Trichocyst matrix protein T1-B (T1B) of Paramecium tetraurelia.